A 127-amino-acid polypeptide reads, in one-letter code: Large ribosomal subunit protein bL12 (127 aa).

It belongs to the bacterial ribosomal protein bL12 family. In terms of assembly, homodimer. Part of the ribosomal stalk of the 50S ribosomal subunit. Forms a multimeric L10(L12)X complex, where L10 forms an elongated spine to which 2 to 4 L12 dimers bind in a sequential fashion. Binds GTP-bound translation factors.

Forms part of the ribosomal stalk which helps the ribosome interact with GTP-bound translation factors. Is thus essential for accurate translation. The polypeptide is Large ribosomal subunit protein bL12 (Streptomyces avermitilis (strain ATCC 31267 / DSM 46492 / JCM 5070 / NBRC 14893 / NCIMB 12804 / NRRL 8165 / MA-4680)).